A 272-amino-acid chain; its full sequence is MLNAEHLHVARDSGVILRDLSIRIAPGCVTALLGRNGAGKSTLLGALAGDLPAGGRTRGATVRGDVALNGEPLRAIDATRLARLRAVLPQASRPAFAFSARDIVLLGRYPHARRAGALAREDGEIASRALALAGASTLDARDVTTLSGGELARVQFARVLAQLWPSEDAARAPRYLLLDEPTAALDLAHQHQLLDTVRRLSRDWNIGVLTIVHDPNLAARHADRIAMLADGEILADGAPADVLRPDLIERCYGFRVRLVDAGDDVAPVIVPA.

Positions 2 to 255 (LNAEHLHVAR…DLIERCYGFR (254 aa)) constitute an ABC transporter domain. 34–41 (GRNGAGKS) lines the ATP pocket.

The protein belongs to the ABC transporter superfamily. Heme (hemin) importer (TC 3.A.1.14.5) family. In terms of assembly, the complex is composed of two ATP-binding proteins (HmuV), two transmembrane proteins (HmuU) and a solute-binding protein (HmuT).

The protein resides in the cell inner membrane. Part of the ABC transporter complex HmuTUV involved in hemin import. Responsible for energy coupling to the transport system. The sequence is that of Hemin import ATP-binding protein HmuV from Burkholderia thailandensis (strain ATCC 700388 / DSM 13276 / CCUG 48851 / CIP 106301 / E264).